A 296-amino-acid polypeptide reads, in one-letter code: Fructose-bisphosphate aldolase class 1 (296 aa).

Catalysis depends on glutamate 175, which acts as the Proton acceptor. Lysine 212 functions as the Schiff-base intermediate with dihydroxyacetone-P in the catalytic mechanism.

The protein belongs to the class I fructose-bisphosphate aldolase family.

It catalyses the reaction beta-D-fructose 1,6-bisphosphate = D-glyceraldehyde 3-phosphate + dihydroxyacetone phosphate. The protein operates within carbohydrate degradation; glycolysis; D-glyceraldehyde 3-phosphate and glycerone phosphate from D-glucose: step 4/4. The sequence is that of Fructose-bisphosphate aldolase class 1 (fda) from Staphylococcus epidermidis (strain ATCC 12228 / FDA PCI 1200).